The sequence spans 823 residues: MDLVDPSQSAAAAAGTQTVKDEVSEKCQKLFQDFLEEFRGSDGELKYQSDAEELIRPERNTLLVSFIDLEQFNQQLATTIQEEFYRVYPYLCRAVKAFARDHGNVPQNKEFYVAFQDLPTRHKIRELTTPRIGSLLRISGQVVRTHPVHPELVSGTFLCLDCQTLVRDVEQQFKYTQPSICRNPVCANRRRFMLDTNKSRFVDFQKVRIQETQAELPRGSIPRSVEVILRAEAVESCQAGDRCDFTGSLIVVPDISQLATPGVRAETSARVGGTEGYQAEGVQGLRALGVRDLSYKLVFLACYVCPTNPRFGGKDLHEEDMTAESIKNQMSVKEWEKVFEMSQDKNLYHNLCTSLFPTVHGNDEVKRGILLMLFGGVPKTTMEGTSLRGDINVCIVGDPSTAKSQFLKHVEEFSPRAVYTSGKASSAAGLTAAVVKDEESHEFVIEAGALMLADNGVCCIDEFDKMDTKDQVAIHEAMEQQTISITKAGVKATLNARTSILAAANPVGGRYDRAKSLKQNINLSAPIMSRFDLFFILVDECNEVTDYAIARRIVDLHSRIEESIDRVYTLDEVRRYLLFARQFKPKISKESEDFIVEQYKRLRQRDGTGVTKSAWRITVRQLESMIRLSEGMARMHCSDEVQPKHVKEAFRLLNKSIIRVETPDVNLDQEDEHEAEEEPQEVINGDASVPSGVNGHVNGMNGHAEEPNAATPKPSLRLNFAEYKRISNLLVLQLRKMEDEDETSQRKSELINWYLKEIESEIDSEEELVTRKQIIDKVVHRLVHYDQILIELTQTGLKGTGDEEVPKEEDPYLVVNPNYILED.

The segment at 159–186 (CLDCQTLVRDVEQQFKYTQPSICRNPVC) adopts a C4-type zinc-finger fold. An MCM domain is found at 347–554 (LYHNLCTSLF…TDYAIARRIV (208 aa)). ATP is bound at residue 397–404 (GDPSTAKS). Positions 529 to 532 (SRFD) match the Arginine finger motif. Residues 666–713 (NLDQEDEHEAEEEPQEVINGDASVPSGVNGHVNGMNGHAEEPNAATPK) form a disordered region. Residues 667 to 680 (LDQEDEHEAEEEPQ) are compositionally biased toward acidic residues. The segment covering 692–702 (GVNGHVNGMNG) has biased composition (low complexity).

Belongs to the MCM family. Component of the mcm2-7 complex (RLF-M). The complex forms a toroidal hexameric ring with the proposed subunit order mcm2-mcm6-mcm4-mcm7-mcm3-mcm5. Begins to associate with zmcm3, mcm4 and mcm7 into mcm complexes at the neurula stage.

The protein resides in the nucleus. It catalyses the reaction ATP + H2O = ADP + phosphate + H(+). Functionally, acts as a component of the mcm2-7 complex (mcm complex) which is the putative replicative helicase essential for 'once per cell cycle' DNA replication initiation and elongation in eukaryotic cells. The active ATPase sites in the mcm2-7 ring are formed through the interaction surfaces of two neighboring subunits such that a critical structure of a conserved arginine finger motif is provided in trans relative to the ATP-binding site of the Walker A box of the adjacent subunit. The six ATPase active sites, however, are likely to contribute differentially to the complex helicase activity. The existence of maternal and zygotic forms of mcm3 and mcm6 suggests that specific forms of mcm2-7 complexes may be used during different stages of development. May replace mmcm6 in the mcm2-7 complex. This chain is Zygotic DNA replication licensing factor mcm6, found in Xenopus tropicalis (Western clawed frog).